The primary structure comprises 237 residues: UPF0280 protein Mbur_0309 (237 aa).

The protein belongs to the UPF0280 family.

The protein is UPF0280 protein Mbur_0309 of Methanococcoides burtonii (strain DSM 6242 / NBRC 107633 / OCM 468 / ACE-M).